Here is a 144-residue protein sequence, read N- to C-terminus: Small polypeptide DEVIL 15 (144 aa).

Residue N8 is glycosylated (N-linked (GlcNAc...) asparagine). Positions S22–D63 are disordered. The chain crosses the membrane as a helical span at residues I104–A120. The segment at S111–K142 is required for DVL/RTFL small polypeptide activity.

The protein belongs to the DVL/RTFL small polypeptides family.

It is found in the cell membrane. Its function is as follows. Small polypeptide acting as a regulatory molecule which coordinates cellular responses required for differentiation, growth and development, probably by restricting polar cell proliferation in lateral organs and coordinating socket cell recruitment and differentiation at trichome sites. The chain is Small polypeptide DEVIL 15 from Arabidopsis thaliana (Mouse-ear cress).